The chain runs to 288 residues: Light-independent protochlorophyllide reductase iron-sulfur ATP-binding protein (288 aa).

Residues 12–17 and K41 contribute to the ATP site; that span reads GIGKST. S16 contributes to the Mg(2+) binding site. Residues C97 and C131 each contribute to the [4Fe-4S] cluster site. ATP is bound at residue 182 to 183; sequence NR.

It belongs to the NifH/BchL/ChlL family. In terms of assembly, homodimer. Protochlorophyllide reductase is composed of three subunits; ChlL, ChlN and ChlB. Requires [4Fe-4S] cluster as cofactor.

The catalysed reaction is chlorophyllide a + oxidized 2[4Fe-4S]-[ferredoxin] + 2 ADP + 2 phosphate = protochlorophyllide a + reduced 2[4Fe-4S]-[ferredoxin] + 2 ATP + 2 H2O. Its pathway is porphyrin-containing compound metabolism; chlorophyll biosynthesis (light-independent). Functionally, component of the dark-operative protochlorophyllide reductase (DPOR) that uses Mg-ATP and reduced ferredoxin to reduce ring D of protochlorophyllide (Pchlide) to form chlorophyllide a (Chlide). This reaction is light-independent. The L component serves as a unique electron donor to the NB-component of the complex, and binds Mg-ATP. This chain is Light-independent protochlorophyllide reductase iron-sulfur ATP-binding protein, found in Picosynechococcus sp. (strain ATCC 27264 / PCC 7002 / PR-6) (Agmenellum quadruplicatum).